The sequence spans 297 residues: Mycothiol acetyltransferase (297 aa).

2 consecutive N-acetyltransferase domains span residues 7–156 (VFSD…VTIR) and 153–297 (VTIR…PPPH). Position 38 (glutamate 38) interacts with 1D-myo-inositol 2-(L-cysteinylamino)-2-deoxy-alpha-D-glucopyranoside. Residue 79–81 (VVV) participates in acetyl-CoA binding. The 1D-myo-inositol 2-(L-cysteinylamino)-2-deoxy-alpha-D-glucopyranoside site is built by glutamate 180, lysine 219, and glutamate 227. Acetyl-CoA-binding positions include 231-233 (VGV) and 238-244 (QGLGLGR). Residue tyrosine 265 coordinates 1D-myo-inositol 2-(L-cysteinylamino)-2-deoxy-alpha-D-glucopyranoside. Residue 270–275 (NRPALR) coordinates acetyl-CoA.

Belongs to the acetyltransferase family. MshD subfamily. As to quaternary structure, monomer.

It catalyses the reaction 1D-myo-inositol 2-(L-cysteinylamino)-2-deoxy-alpha-D-glucopyranoside + acetyl-CoA = mycothiol + CoA + H(+). In terms of biological role, catalyzes the transfer of acetyl from acetyl-CoA to desacetylmycothiol (Cys-GlcN-Ins) to form mycothiol. This Thermomonospora curvata (strain ATCC 19995 / DSM 43183 / JCM 3096 / KCTC 9072 / NBRC 15933 / NCIMB 10081 / Henssen B9) protein is Mycothiol acetyltransferase.